The sequence spans 598 residues: Thiamine transporter (598 aa).

Over methionine 1–threonine 41 the chain is Cytoplasmic. Residues tryptophan 42–methionine 62 traverse the membrane as a helical segment. Topologically, residues serine 63–serine 73 are extracellular. Residues tyrosine 74 to alanine 94 traverse the membrane as a helical segment. The Cytoplasmic portion of the chain corresponds to asparagine 95–arginine 111. The chain crosses the membrane as a helical span at residues phenylalanine 112 to valine 132. Over asparagine 133–glutamate 173 the chain is Extracellular. A helical membrane pass occupies residues leucine 174–histidine 194. The Cytoplasmic portion of the chain corresponds to methionine 195 to tyrosine 197. Residues isoleucine 198–alanine 218 traverse the membrane as a helical segment. Over lysine 219–lysine 240 the chain is Extracellular. Residues alanine 241–asparagine 261 traverse the membrane as a helical segment. Residues glutamine 262–alanine 274 lie on the Cytoplasmic side of the membrane. A helical transmembrane segment spans residues isoleucine 275–valine 295. At isoleucine 296–alanine 332 the chain is on the extracellular side. Residues phenylalanine 333 to phenylalanine 353 traverse the membrane as a helical segment. Topologically, residues alanine 354–arginine 371 are cytoplasmic. Residues glycine 372–serine 392 form a helical membrane-spanning segment. Over serine 393–threonine 394 the chain is Extracellular. The helical transmembrane segment at phenylalanine 395–cysteine 415 threads the bilayer. The Cytoplasmic portion of the chain corresponds to aspartate 416–arginine 446. The helical transmembrane segment at alanine 447–asparagine 467 threads the bilayer. Topologically, residues asparagine 468 to aspartate 483 are extracellular. Residues serine 484–phenylalanine 504 form a helical membrane-spanning segment. The Cytoplasmic portion of the chain corresponds to lysine 505 to alanine 598. Position 560 is a phosphoserine (serine 560). The tract at residues asparagine 574 to alanine 598 is disordered. Residues lysine 588 to alanine 598 show a composition bias toward polar residues.

It belongs to the purine-cytosine permease (2.A.39) family.

The protein resides in the membrane. Responsible for intake of thiamine. The protein is Thiamine transporter (THI7) of Saccharomyces cerevisiae (strain ATCC 204508 / S288c) (Baker's yeast).